Consider the following 72-residue polypeptide: Protein Kish (72 aa).

Positions 1-26 are cleaved as a signal peptide; the sequence is MSALFNFRSLLQVILLLICSCSYVHG. Residues 27-53 are Lumenal-facing; the sequence is QWPSLLDRYKNHEVLGAFWKMARVGER. Residues 54 to 72 traverse the membrane as a helical segment; sequence ASPYVSLACILMAISQFNS.

Belongs to the KISH family.

The protein resides in the endoplasmic reticulum membrane. Its subcellular location is the golgi apparatus membrane. Involved in the early part of the secretory pathway. This Saccharomyces cerevisiae (strain ATCC 204508 / S288c) (Baker's yeast) protein is Protein Kish.